Here is a 178-residue protein sequence, read N- to C-terminus: 2-C-methyl-D-erythritol 2,4-cyclodiphosphate synthase (178 aa).

A divalent metal cation contacts are provided by Asp24, His26, and His61. 24-26 (DSH) contacts 4-CDP-2-C-methyl-D-erythritol 2-phosphate. 150-153 (TSGE) contacts 4-CDP-2-C-methyl-D-erythritol 2-phosphate.

This sequence belongs to the IspF family. Homotrimer. Requires a divalent metal cation as cofactor.

The enzyme catalyses 4-CDP-2-C-methyl-D-erythritol 2-phosphate = 2-C-methyl-D-erythritol 2,4-cyclic diphosphate + CMP. The protein operates within isoprenoid biosynthesis; isopentenyl diphosphate biosynthesis via DXP pathway; isopentenyl diphosphate from 1-deoxy-D-xylulose 5-phosphate: step 4/6. Functionally, involved in the biosynthesis of isopentenyl diphosphate (IPP) and dimethylallyl diphosphate (DMAPP), two major building blocks of isoprenoid compounds. Catalyzes the conversion of 4-diphosphocytidyl-2-C-methyl-D-erythritol 2-phosphate (CDP-ME2P) to 2-C-methyl-D-erythritol 2,4-cyclodiphosphate (ME-CPP) with a corresponding release of cytidine 5-monophosphate (CMP). This is 2-C-methyl-D-erythritol 2,4-cyclodiphosphate synthase from Chlamydia trachomatis serovar L2 (strain ATCC VR-902B / DSM 19102 / 434/Bu).